The chain runs to 1411 residues: Zinc finger protein 609 (1411 aa).

Disordered regions lie at residues 1–26, 47–190, 353–484, 517–659, 679–963, 1005–1125, 1153–1221, and 1270–1367; these read MSLS…SGDE, QKLE…QPVP, PRFC…EPTV, AHAH…ARPI, ASPG…VIQQ, YEEQ…RQAE, KSED…LTQH, and GSKV…STHH. Ser358, Ser361, and Ser379 each carry phosphoserine. The span at 377 to 401 shows a compositional bias: polar residues; the sequence is PNSNTPVNETATASDSKGTSNSSKT. Thr381 carries the phosphothreonine modification. 6 positions are modified to phosphoserine: Ser413, Ser433, Ser446, Ser452, Ser467, and Ser470. Over residues 423–437 the composition is skewed to polar residues; that stretch reads ASSTSEDVKASPSSA. Lys479 participates in a covalent cross-link: Glycyl lysine isopeptide (Lys-Gly) (interchain with G-Cter in SUMO2). Residues 495-520 form a C2H2-type zinc finger; sequence IDCPHPNCNKKYKHINGLKYHQAHAH. Basic and acidic residues predominate over residues 519-529; that stretch reads AHTDDDSKPEA. Residue Ser533 is modified to Phosphoserine. The segment covering 549–563 has biased composition (polar residues); that stretch reads NGASVSQKGSLSPAR. 2 positions are modified to phosphoserine: Ser576 and Ser578. A compositionally biased stretch (basic and acidic residues) spans 626–649; the sequence is SLERKCMEKEKCKKPSSLKPEKIP. Positions 679-700 are enriched in polar residues; the sequence is ASPGSSSGLTATVAQAMPNSPQ. A compositionally biased stretch (basic residues) spans 726–736; it reads DKKKKDKKKKE. Ser743 carries the phosphoserine modification. Thr746 carries the phosphothreonine modification. Basic and acidic residues predominate over residues 751–764; the sequence is CRAEEGKSPFRESS. Ser758 bears the Phosphoserine mark. Lys789 is covalently cross-linked (Glycyl lysine isopeptide (Lys-Gly) (interchain with G-Cter in SUMO2)). Residues 798–844 are compositionally biased toward polar residues; it reads FTDNAPSPSIGGSSRLENTTPTQPLTPLHVVTQNGAEASSVKTNSPA. Residue Ser804 is modified to Phosphoserine. Position 823 is a phosphothreonine (Thr823). Ser842, Ser846, and Ser849 each carry phosphoserine. A compositionally biased stretch (basic and acidic residues) spans 855–876; sequence GEGKVDSVKSKDAEQLVKEGAK. Positions 897 to 908 are enriched in low complexity; it reads SYYSPSYAQSSP. Residues 926-950 show a composition bias toward basic and acidic residues; that stretch reads TKRDEEPESIEGKVKNDICEEKKPE. The segment covering 952 to 963 has biased composition (low complexity); sequence SSSSQQPSVIQQ. Residues 1020-1042 are compositionally biased toward basic and acidic residues; it reads GVDKKAEMGLKEREAALKEEWKQ. A Phosphoserine modification is found at Ser1055. A Glycyl lysine isopeptide (Lys-Gly) (interchain with G-Cter in SUMO2) cross-link involves residue Lys1061. Basic and acidic residues-rich tracts occupy residues 1097 to 1113, 1153 to 1187, and 1195 to 1208; these read LKVK…EASE, KSED…KEST, and TSEE…EPRP. Residue Lys1153 forms a Glycyl lysine isopeptide (Lys-Gly) (interchain with G-Cter in SUMO2) linkage. Residues 1286–1296 are compositionally biased toward polar residues; that stretch reads PSVTCKSSSES. A Glycyl lysine isopeptide (Lys-Gly) (interchain with G-Cter in SUMO2) cross-link involves residue Lys1297. Gly residues predominate over residues 1328–1337; that stretch reads GCGVVGGGGS.

In terms of assembly, interacts (via N-terminus) with NIPBL. Interacts with INTS13; promoting association with the integrator complex. As to expression, isoform 1: Expressed in myoblasts and myotubes. Isoform 2: Expressed in myoblasts and myotubes, with a preference in undifferentiated myoblasts.

It localises to the nucleus. Functionally, transcription factor, which activates RAG1, and possibly RAG2, transcription. Through the regulation of RAG1/2 expression, may regulate thymocyte maturation. Along with NIPBL and the multiprotein complex Integrator, promotes cortical neuron migration during brain development by regulating the transcription of crucial genes in this process. Preferentially binds promoters containing paused RNA polymerase II. Up-regulates the expression of SEMA3A, NRP1, PLXND1 and GABBR2 genes, among others. Involved in the regulation of myoblast proliferation during myogenesis. The polypeptide is Zinc finger protein 609 (Homo sapiens (Human)).